Consider the following 381-residue polypeptide: Pentraxin-related protein PTX3 (381 aa).

An N-terminal signal peptide occupies residues 1 to 17; that stretch reads MHLLAILFCALWSAVLA. Coiled coils occupy residues 74 to 101 and 143 to 167; these read LQATDDVLRGELQRLREELGRLAESLAR and EEAGRALAAVLEELRQTRADLHAVQ. 2 disulfide bridges follow: C179-C357 and C210-C271. In terms of domain architecture, Pentraxin (PTX) spans 179-381; the sequence is CETAILFPMR…QPHGGAQYVS (203 aa). A glycan (N-linked (GlcNAc...) asparagine) is linked at N220.

In terms of assembly, homooctamer; disulfide-linked. Binds to C1q. As to quaternary structure, (Microbial infection) Interacts with SARS coronavirus-2/SARS-CoV-2 Nucleoprotein and Spike protein homotrimer. In terms of processing, glycosylated.

It is found in the secreted. Plays a role in the regulation of innate resistance to pathogens, inflammatory reactions, possibly clearance of self-components and female fertility. The sequence is that of Pentraxin-related protein PTX3 from Homo sapiens (Human).